We begin with the raw amino-acid sequence, 363 residues long: MKCKLIFAVFMLAFSMPSQAERIKDIANVQGVRNNQLIGYGLVVGLPGTGEKTNYTEQTFTTMLKNFGINLPENFRPKIKNVAVVAVHADMPAFIKPGQELDVTVSSLGEAKSLRGGTLLQTFLKGVDGNVYAIAQGSLVVSGFSADGLDGSKVIQNTPTVGRIPNGAIVERSVATPFSTGDYLTFNLRRSDFSTAQRMADAINDLLGPDMARPLDATSIQVSAPRDVSQRVSFLATLENIEVEPAEESAKVIVNSRTGTIVVGQNVKLLPAAVTHGGLTVTIAEATQVSQPNALANGQTTVTSNSTINATESDRRMFMFNPGTTLDELVRAVNLVGAAPSDVLAILEALKVAGALHGELIII.

A signal peptide spans methionine 1 to alanine 20.

It belongs to the FlgI family. In terms of assembly, the basal body constitutes a major portion of the flagellar organelle and consists of four rings (L,P,S, and M) mounted on a central rod.

It is found in the periplasm. Its subcellular location is the bacterial flagellum basal body. Its function is as follows. Assembles around the rod to form the L-ring and probably protects the motor/basal body from shearing forces during rotation. The sequence is that of Flagellar P-ring protein from Shewanella oneidensis (strain ATCC 700550 / JCM 31522 / CIP 106686 / LMG 19005 / NCIMB 14063 / MR-1).